The sequence spans 551 residues: Cation/acetate symporter ActP (551 aa).

The next 14 helical transmembrane spans lie at 5-25 (HWSA…ALTG), 34-54 (IQAI…TYWA), 77-97 (GLAI…SALV), 104-124 (GLIY…LIAE), 150-170 (LSAC…MVGA), 184-204 (VAVV…GMLA), 207-227 (WVQI…AIMV), 263-283 (ISAL…PHIL), 304-324 (GFIG…ILLV), 356-376 (FFLG…VAGL), 406-426 (VSKI…ILFE), 430-450 (IAFM…PIII), 469-489 (LGLS…VTIL), and 498-518 (YEYP…FFSI).

This sequence belongs to the sodium:solute symporter (SSF) (TC 2.A.21) family.

It localises to the cell inner membrane. Transports acetate. The polypeptide is Cation/acetate symporter ActP (Yersinia pseudotuberculosis serotype IB (strain PB1/+)).